Here is a 324-residue protein sequence, read N- to C-terminus: Glycerol-3-phosphate dehydrogenase [NAD(P)+] (324 aa).

NADPH is bound by residues Phe-11, Arg-31, and Lys-107. 2 residues coordinate sn-glycerol 3-phosphate: Lys-107 and Gly-135. Ala-139 serves as a coordination point for NADPH. The sn-glycerol 3-phosphate site is built by Lys-190, Asp-245, Ser-255, Arg-256, and Asn-257. The Proton acceptor role is filled by Lys-190. Arg-256 contributes to the NADPH binding site. Residues Val-278 and Glu-279 each coordinate NADPH.

It belongs to the NAD-dependent glycerol-3-phosphate dehydrogenase family.

It is found in the cytoplasm. It carries out the reaction sn-glycerol 3-phosphate + NAD(+) = dihydroxyacetone phosphate + NADH + H(+). The enzyme catalyses sn-glycerol 3-phosphate + NADP(+) = dihydroxyacetone phosphate + NADPH + H(+). The protein operates within membrane lipid metabolism; glycerophospholipid metabolism. Its function is as follows. Catalyzes the reduction of the glycolytic intermediate dihydroxyacetone phosphate (DHAP) to sn-glycerol 3-phosphate (G3P), the key precursor for phospholipid synthesis. The protein is Glycerol-3-phosphate dehydrogenase [NAD(P)+] of Anaplasma phagocytophilum (strain HZ).